The following is a 319-amino-acid chain: MARKKIALIGAGNIGGTLAHLSLIKQLGDVVLFDIAPGMPQGKALDLLQSCPIEGVDFKVRGTNDYKDLEHSDVVIVTAGVPRKPGMSRDDLLGINIKVMQAVGEGIKHNCPDAFVICITNPLDIMVNMLQKFSGVPDNKIVGMAGVLDSARFRTFLADELNVSVQQVQAYVMGGHGDTMVPLTKMSNVAGVSLEQLVKEGKISQERLDSIVARTRNGGGEIVALLKTGSAYYAPAAAGIQMAESYLRDKKMILPCAAKIKAGMYGVDEDLFVGVPTEISANGVRPIHVEISEKEKEQLQVSINAVKELNKAAAEILAN.

NAD(+) contacts are provided by residues 10-15 (GAGNIG) and Asp34. 2 residues coordinate substrate: Arg83 and Arg89. NAD(+)-binding positions include Asn96 and 119-121 (ITN). Positions 121 and 152 each coordinate substrate. Residue His176 is the Proton acceptor of the active site.

It belongs to the LDH/MDH superfamily. MDH type 3 family.

It carries out the reaction (S)-malate + NAD(+) = oxaloacetate + NADH + H(+). In terms of biological role, catalyzes the reversible oxidation of malate to oxaloacetate. The chain is Malate dehydrogenase from Francisella philomiragia subsp. philomiragia (strain ATCC 25017 / CCUG 19701 / FSC 153 / O#319-036).